A 760-amino-acid polypeptide reads, in one-letter code: Serine/threonine-protein kinase Haspin homolog ALK1 (760 aa).

Phosphoserine occurs at positions 76 and 79. Disordered stretches follow at residues 76-100 (SDAS…KKRW), 123-153 (SSFT…SSLD), 187-264 (DDIS…STVS), and 362-408 (KRNS…CSYS). Over residues 78–95 (ASLNVTTGNNTSRKTTSN) the composition is skewed to polar residues. A KEN box motif is present at residues 200–202 (KEN). A compositionally biased stretch (polar residues) spans 209 to 220 (KKNSSIASTSSE). The D box motif lies at 224–232 (RTPLKPLVN). The segment covering 237–250 (PTSQPQQQQPLYNA) has biased composition (polar residues). The segment covering 251-264 (SLSSRRSSISSTVS) has biased composition (low complexity). Residues 362 to 386 (KRNSQSSLKHKSSHASLQKFKRNKG) are compositionally biased toward basic residues. Over residues 398–408 (NSSNDDSCSYS) the composition is skewed to low complexity. Positions 468-760 (NCDIKRILNP…NTGDLLKLYK (293 aa)) constitute a Protein kinase domain. ATP contacts are provided by residues 474–482 (ILNPAKGDV) and K510.

The protein belongs to the protein kinase superfamily. Ser/Thr protein kinase family. Haspin subfamily. Post-translationally, periodically phosphorylated during the cell cycle with a phosphorylation peak during mitosis and hyperphosphorylated after DNA damage.

The enzyme catalyses L-seryl-[protein] + ATP = O-phospho-L-seryl-[protein] + ADP + H(+). It carries out the reaction L-threonyl-[protein] + ATP = O-phospho-L-threonyl-[protein] + ADP + H(+). Functionally, serine/threonine haspin-like protein kinase involved in cell cycle regulation. In Saccharomyces cerevisiae (strain ATCC 204508 / S288c) (Baker's yeast), this protein is Serine/threonine-protein kinase Haspin homolog ALK1 (ALK1).